A 721-amino-acid polypeptide reads, in one-letter code: Protein mu-NS (721 aa).

The tract at residues 1–13 (MASFKGFSANTVP) is interaction with sigma-NS. The segment at 1–38 (MASFKGFSANTVPVSKAKRDISSLAATPGLRSQSFTPS) is RNA-binding. An interaction with mu-2 region spans residues 14–40 (VSKAKRDISSLAATPGLRSQSFTPSVD). Positions 471–721 (SNDVTDGIKL…IDFSVPTDEL (251 aa)) are involved in the formation of factory-like inclusions. Coiled coils occupy residues 522 to 559 (PLLSQLRELSSEVTRLQMELSRAQSLNAQLEADVKSAQ) and 628 to 684 (LMNG…ALNQ).

The protein belongs to the orthoreovirus mu-NS protein family. As to quaternary structure, interacts with mu-2. Interacts with sigma-NS; in viral factories. Interacts with the inner capsid proteins lambda-1 and sigma-2, and outer capsid protein lambda-2; in viral factories. In terms of processing, the N-terminus is blocked.

It localises to the host cytoplasm. Non-structural protein implicated with protein sigma-NS in forming the matrix of viral factories, which are large inclusions in the host cytoplasm where replication intermediates are assembled and viral RNA replication takes place. Together with mu-2, recruits the other core proteins to these factories. Binds RNA and recruits viral mRNAs to sites of viral replication. This chain is Protein mu-NS (M3), found in Reovirus type 3 (strain Dearing) (T3D).